Consider the following 925-residue polypeptide: Neuropilin-2 (925 aa).

The N-terminal stretch at 1–22 is a signal peptide; that stretch reads MDMFPLTWIFLALYFSGHKVRS. The Extracellular segment spans residues 23–858; that stretch reads QQDPPCGGRL…EKSWLYTLDP (836 aa). Disulfide bonds link cysteine 28–cysteine 55, cysteine 83–cysteine 105, and cysteine 149–cysteine 175. 2 CUB domains span residues 28-142 and 149-267; these read CGGR…YEIF and CSKN…YYLV. Residues asparagine 152 and asparagine 157 are each glycosylated (N-linked (GlcNAc...) asparagine). The Ca(2+) site is built by glutamate 197, aspartate 211, and aspartate 252. A disulfide bridge links cysteine 208 with cysteine 230. 2 cysteine pairs are disulfide-bonded: cysteine 277-cysteine 427 and cysteine 434-cysteine 592. F5/8 type C domains are found at residues 277-427 and 434-592; these read CNAP…LFGC and CSNM…VLGC. Over residues 297-310 the composition is skewed to polar residues; that stretch reads STFSDGRWTPQQSR. The interval 297–317 is disordered; sequence STFSDGRWTPQQSRLHGDDNG. The segment at 601–621 is disordered; the sequence is VETLGPTVKSEETTTPYPMDE. An N-linked (GlcNAc...) asparagine glycan is attached at asparagine 629. Positions 642–802 constitute an MAM domain; the sequence is SGFNCNFDFP…TDVPLENCME (161 aa). Positions 820 to 830 are enriched in acidic residues; it reads YEDEIDDDYEG. The disordered stretch occupies residues 820 to 849; that stretch reads YEDEIDDDYEGDWNNSSSTSGAGSPSSGKE. Asparagine 833 and asparagine 834 each carry an N-linked (GlcNAc...) asparagine glycan. The span at 835 to 846 shows a compositional bias: low complexity; it reads SSSTSGAGSPSS. A helical transmembrane segment spans residues 859–883; sequence ILITIIAMSSLGVLLGATCAGLLLY. The Cytoplasmic segment spans residues 884-925; sequence CTCSYSGLSSRSCTTLENYNFELYDGLKHKVKINHQKCCSEA.

This sequence belongs to the neuropilin family. In terms of assembly, heterodimer with NRP1. Binds PLXNB1. In terms of tissue distribution, found in certain neuronal populations of the CNS, including dorsal root ganglia, and in other non-neuronal tissues including mesenchymal tissue lining in the ribs.

It is found in the membrane. Functionally, high affinity receptor for semaphorins 3C, 3F, VEGF-165 and VEGF-145 isoforms of VEGF, and the PLGF-2 isoform of PGF. The chain is Neuropilin-2 (Nrp2) from Rattus norvegicus (Rat).